Reading from the N-terminus, the 667-residue chain is Transmembrane 9 superfamily member 1 (667 aa).

The first 22 residues, 1 to 22 (MIYKMAHVQLLLLYFFVSTVKA), serve as a signal peptide directing secretion. Topologically, residues 23–302 (FYLPGVAPTT…DKYLHVYDPS (280 aa)) are lumenal. Asparagine 61 and asparagine 282 each carry an N-linked (GlcNAc...) asparagine glycan. Residues 303-323 (IQWFSLINFSLVVVLLSSVVI) traverse the membrane as a helical segment. Residues 324-370 (HSLLRALKSDFARYNELNLDDDFQEDSGWKLNHGDVFRSPSQSLTLS) are Cytoplasmic-facing. The helical transmembrane segment at 371-391 (ILVGSGVQLFLMVTCSIFFAA) threads the bilayer. Topologically, residues 392–405 (LGFLSPSSRGSLAT) are lumenal. The helical transmembrane segment at 406-426 (VMFILYALFGFVGSYTSMGIY) threads the bilayer. Over 427–442 (KFFNGPYWKANLILTP) the chain is Cytoplasmic. The chain crosses the membrane as a helical span at residues 443 to 463 (LLVPGAILLIIIALNFFLMFV). Residues 464 to 474 (HSSGVIPASTL) are Lumenal-facing. A helical transmembrane segment spans residues 475–495 (FFMVFLWFLFSIPLSFAGSLI). Residues 496–527 (ARKRCHWDEHPTKTNQIARQIPFQPWYLKTIP) lie on the Cytoplasmic side of the membrane. A helical membrane pass occupies residues 528 to 548 (ATLIAGIFPFGSIAVELYFIY). The Lumenal portion of the chain corresponds to 549-560 (TSLWFNKIFYMF). A helical membrane pass occupies residues 561-581 (GFLFFSFLLLTLTSSLVTILI). The Cytoplasmic segment spans residues 582–596 (TYHSLCLENWKWQWR). The chain crosses the membrane as a helical span at residues 597–617 (GFIIGGAGCALYVFIHSILFT). The Lumenal portion of the chain corresponds to 618–635 (KFKLGGFTTIVLYVGYSS). A helical transmembrane segment spans residues 636–656 (VISLLCCLVTGSIGFISSMLF). The Cytoplasmic segment spans residues 657 to 667 (VRKIYSSIKVD).

This sequence belongs to the nonaspanin (TM9SF) (TC 9.A.2) family.

It localises to the endosome membrane. The protein localises to the vacuole membrane. Its function is as follows. With TMN2 and TMN3, plays a critical role in the late stages of a nutrient-controlled pathway notably regulating FLO11 gene expression. Acts downstream of RAS2 and TOR. Essential for cell adhesion and filamentous growth. May play a role as effector of cellular copper homeostasis. This Saccharomyces cerevisiae (strain ATCC 204508 / S288c) (Baker's yeast) protein is Transmembrane 9 superfamily member 1 (EMP70).